We begin with the raw amino-acid sequence, 187 residues long: Elongation factor P (187 aa).

Belongs to the elongation factor P family.

Its subcellular location is the cytoplasm. The protein operates within protein biosynthesis; polypeptide chain elongation. Functionally, involved in peptide bond synthesis. Stimulates efficient translation and peptide-bond synthesis on native or reconstituted 70S ribosomes in vitro. Probably functions indirectly by altering the affinity of the ribosome for aminoacyl-tRNA, thus increasing their reactivity as acceptors for peptidyl transferase. The polypeptide is Elongation factor P (Mycobacterium marinum (strain ATCC BAA-535 / M)).